The sequence spans 312 residues: DNA-directed RNA polymerase subunit alpha (312 aa).

The segment at Met-1–Thr-226 is alpha N-terminal domain (alpha-NTD). Positions Asn-242–Lys-312 are alpha C-terminal domain (alpha-CTD).

The protein belongs to the RNA polymerase alpha chain family. Homodimer. The RNAP catalytic core consists of 2 alpha, 1 beta, 1 beta' and 1 omega subunit. When a sigma factor is associated with the core the holoenzyme is formed, which can initiate transcription.

The enzyme catalyses RNA(n) + a ribonucleoside 5'-triphosphate = RNA(n+1) + diphosphate. Functionally, DNA-dependent RNA polymerase catalyzes the transcription of DNA into RNA using the four ribonucleoside triphosphates as substrates. The chain is DNA-directed RNA polymerase subunit alpha from Streptococcus agalactiae serotype Ia (strain ATCC 27591 / A909 / CDC SS700).